The primary structure comprises 198 residues: GTP cyclohydrolase 1 (198 aa).

The Zn(2+) site is built by C87, H90, and C158.

Belongs to the GTP cyclohydrolase I family. As to quaternary structure, homomer.

The enzyme catalyses GTP + H2O = 7,8-dihydroneopterin 3'-triphosphate + formate + H(+). The protein operates within cofactor biosynthesis; 7,8-dihydroneopterin triphosphate biosynthesis; 7,8-dihydroneopterin triphosphate from GTP: step 1/1. In Janthinobacterium sp. (strain Marseille) (Minibacterium massiliensis), this protein is GTP cyclohydrolase 1.